A 277-amino-acid chain; its full sequence is MAFFIFLILVGYLMGSINSAIIVCRTFGLPDPREEGSKNPGATNVLRLGGKQYGIMVMVFDALKGILPVILAKLLSAEPVTVAFTALAAVVGHMYPVFFHFRGGKGVATTIGALLAFHFVIGVMVAATWLLVANFWRYSSLASIASISLAPFYSLILVGNLNIFPPLFMITILVLYKHRDNFNRLIDGKEPKIKFKHSVIEEIMEASPATSAEQEFPGKEVIDTNIDEAEKTEQAEAVKKPKAKKATTKAKKTTSKEETAKKPKSTKPKTKTVKEKE.

5 consecutive transmembrane segments (helical) span residues 3–23 (FFIF…AIIV), 55–75 (IMVM…AKLL), 79–99 (PVTV…PVFF), 111–131 (IGAL…TWLL), and 155–175 (LILV…ILVL). Residues 231–277 (KTEQAEAVKKPKAKKATTKAKKTTSKEETAKKPKSTKPKTKTVKEKE) are disordered. Basic residues-rich tracts occupy residues 240–253 (KPKA…AKKT) and 262–271 (KPKSTKPKTK).

This sequence belongs to the PlsY family. As to quaternary structure, probably interacts with PlsX.

Its subcellular location is the cell inner membrane. The catalysed reaction is an acyl phosphate + sn-glycerol 3-phosphate = a 1-acyl-sn-glycero-3-phosphate + phosphate. Its pathway is lipid metabolism; phospholipid metabolism. In terms of biological role, catalyzes the transfer of an acyl group from acyl-phosphate (acyl-PO(4)) to glycerol-3-phosphate (G3P) to form lysophosphatidic acid (LPA). This enzyme utilizes acyl-phosphate as fatty acyl donor, but not acyl-CoA or acyl-ACP. The polypeptide is Glycerol-3-phosphate acyltransferase (Legionella pneumophila (strain Lens)).